Here is a 275-residue protein sequence, read N- to C-terminus: UPF0758 protein RL2068 (275 aa).

Residues 1–45 (MAKGPVSTSSDDELPFETQEPIAADERSFFGGQPQKPSAPNARAA) form a disordered region. Residues 153–275 (VLSSWSSVIQ…HVSLKGLKLI (123 aa)) enclose the MPN domain. The Zn(2+) site is built by His224, His226, and Asp237. Residues 224-237 (HNHPSGDPTPSRAD) carry the JAMM motif motif.

It belongs to the UPF0758 family.

This is UPF0758 protein RL2068 from Rhizobium johnstonii (strain DSM 114642 / LMG 32736 / 3841) (Rhizobium leguminosarum bv. viciae).